The following is a 161-amino-acid chain: S-ribosylhomocysteine lyase (161 aa).

His-57, His-61, and Cys-127 together coordinate Fe cation.

Belongs to the LuxS family. In terms of assembly, homodimer. Requires Fe cation as cofactor.

It carries out the reaction S-(5-deoxy-D-ribos-5-yl)-L-homocysteine = (S)-4,5-dihydroxypentane-2,3-dione + L-homocysteine. Its function is as follows. Involved in the synthesis of autoinducer 2 (AI-2) which is secreted by bacteria and is used to communicate both the cell density and the metabolic potential of the environment. The regulation of gene expression in response to changes in cell density is called quorum sensing. Catalyzes the transformation of S-ribosylhomocysteine (RHC) to homocysteine (HC) and 4,5-dihydroxy-2,3-pentadione (DPD). In Streptococcus equi subsp. equi (strain 4047), this protein is S-ribosylhomocysteine lyase.